A 591-amino-acid polypeptide reads, in one-letter code: V-type ATP synthase alpha chain (591 aa).

233-240 lines the ATP pocket; the sequence is GPFGAGKT.

This sequence belongs to the ATPase alpha/beta chains family.

The enzyme catalyses ATP + H2O + 4 H(+)(in) = ADP + phosphate + 5 H(+)(out). Functionally, produces ATP from ADP in the presence of a proton gradient across the membrane. The V-type alpha chain is a catalytic subunit. The sequence is that of V-type ATP synthase alpha chain from Streptococcus pneumoniae serotype 19F (strain G54).